Consider the following 423-residue polypeptide: Glycine amidinotransferase, mitochondrial (423 aa).

The transit peptide at 1–48 (MLRVRCLRGGSRGAEAVHYIGSRLGRTLTGWVQRTFQSTQAATASSRN) directs the protein to the mitochondrion. Residues 39 to 51 (TQAATASSRNSSA) show a composition bias toward low complexity. The segment at 39–65 (TQAATASSRNSSAADDKATEPLPKDCP) is disordered. Phosphoserine is present on residues Ser46 and Ser49. Residues 52 to 61 (ADDKATEPLP) are compositionally biased toward basic and acidic residues. Asp170 is an arginine binding site. Catalysis depends on residues Asp254 and His303. 4 residues coordinate arginine: Asp305, Arg322, Ser354, and Ser355. An N6-acetyllysine modification is found at Lys385. Catalysis depends on Cys407, which acts as the Amidino-cysteine intermediate.

Belongs to the amidinotransferase family. Homodimer.

The protein resides in the mitochondrion inner membrane. The catalysed reaction is L-arginine + glycine = guanidinoacetate + L-ornithine. It catalyses the reaction 4-aminobutanoate + L-arginine = 4-guanidinobutanoate + L-ornithine. The enzyme catalyses beta-alanine + L-arginine = 3-guanidinopropanoate + L-ornithine. It carries out the reaction taurine + L-arginine = taurocyamine + L-ornithine. Its pathway is amine and polyamine biosynthesis; creatine biosynthesis; creatine from L-arginine and glycine: step 1/2. Transamidinase that catalyzes the transfer of the amidino group of L-arginine onto the amino moiety of acceptor metabolites such as glycine, beta-alanine, gamma-aminobutyric acid (GABA) and taurine yielding the corresponding guanidine derivatives. Catalyzes the rate-limiting step of creatine biosynthesis, namely the transfer of the amidino group from L-arginine to glycine to generate guanidinoacetate, which is then methylated by GAMT to form creatine. Provides creatine as a source for ATP generation in tissues with high energy demands, in particular skeletal muscle, heart and brain. This Pongo abelii (Sumatran orangutan) protein is Glycine amidinotransferase, mitochondrial (GATM).